Reading from the N-terminus, the 65-residue chain is Large ribosomal subunit protein bL35 (65 aa).

This sequence belongs to the bacterial ribosomal protein bL35 family.

The sequence is that of Large ribosomal subunit protein bL35 from Acetivibrio thermocellus (strain ATCC 27405 / DSM 1237 / JCM 9322 / NBRC 103400 / NCIMB 10682 / NRRL B-4536 / VPI 7372) (Clostridium thermocellum).